The sequence spans 351 residues: Rhodopsin (351 aa).

Residues 1–36 (MNGTEGPFFYIPMVNTTGIVRSPYEYPQYYLVNPAA) are Extracellular-facing. Residues Asn2 and Asn15 are each glycosylated (N-linked (GlcNAc...) asparagine). Residues 37-61 (YAILGAYMFFLIIVGFPVNFMTLYV) traverse the membrane as a helical segment. Topologically, residues 62–73 (TLEHKKLRTPLN) are cytoplasmic. A helical transmembrane segment spans residues 74 to 96 (YILLNLAVADLFMVIGGFTTTMY). The Extracellular segment spans residues 97–110 (TSMHGYFVLGRLGC). Cysteines 110 and 187 form a disulfide. The chain crosses the membrane as a helical span at residues 111–133 (NLEGFFATLGGMISLWSLAVLAI). A 'Ionic lock' involved in activated form stabilization motif is present at residues 134–136 (ERW). Topologically, residues 134–152 (ERWVVVCKPISNFRFGENH) are cytoplasmic. Residues 153 to 173 (AIMGVSLTWGMALACTVPPLV) form a helical membrane-spanning segment. The Extracellular segment spans residues 174–202 (GWSRYIPEGMQCSCGIDYYTRAEGFNNES). An N-linked (GlcNAc...) asparagine glycan is attached at Asn200. The chain crosses the membrane as a helical span at residues 203–224 (FVLYMFFCHFTIPLTIIFFCYG). Topologically, residues 225-252 (RLLCAVKEAAAAQQESETTQRAEREVTR) are cytoplasmic. Residues 253 to 274 (MVIIMVIGFLVCWLPYASVAWF) form a helical membrane-spanning segment. At 275–286 (IFTHQGSEFGPL) the chain is on the extracellular side. A helical transmembrane segment spans residues 287–308 (FMTIPAFFAKSSSIYNPMIYIC). N6-(retinylidene)lysine is present on Lys296. At 309 to 351 (MNKQFRHCMITTLFCGKNPFEGEEEGASSTKTEASSASSVSPA) the chain is on the cytoplasmic side. Cys323 carries S-palmitoyl cysteine lipidation. The segment at 330–351 (GEEEGASSTKTEASSASSVSPA) is disordered. A compositionally biased stretch (low complexity) spans 335–351 (ASSTKTEASSASSVSPA).

The protein belongs to the G-protein coupled receptor 1 family. Opsin subfamily. Phosphorylated on some or all of the serine and threonine residues present in the C-terminal region. In terms of processing, contains one covalently linked retinal chromophore.

It is found in the membrane. It localises to the cell projection. The protein localises to the cilium. The protein resides in the photoreceptor outer segment. Its function is as follows. Photoreceptor required for image-forming vision at low light intensity. While most salt water fish species use retinal as chromophore, most freshwater fish use 3-dehydroretinal, or a mixture of retinal and 3-dehydroretinal. Light-induced isomerization of 11-cis to all-trans retinal triggers a conformational change that activates signaling via G-proteins. Subsequent receptor phosphorylation mediates displacement of the bound G-protein alpha subunit by arrestin and terminates signaling. This Sargocentron diadema (Crown squirrelfish) protein is Rhodopsin (rho).